The chain runs to 387 residues: Phosphoglycerate kinase (387 aa).

Substrate-binding positions include 21–23, Arg36, 59–62, Arg113, and Arg146; these read DLN and HLGR. ATP contacts are provided by residues Lys197, Glu314, and 340 to 343; that span reads GGDT.

Belongs to the phosphoglycerate kinase family. As to quaternary structure, monomer.

It is found in the cytoplasm. It carries out the reaction (2R)-3-phosphoglycerate + ATP = (2R)-3-phospho-glyceroyl phosphate + ADP. The protein operates within carbohydrate degradation; glycolysis; pyruvate from D-glyceraldehyde 3-phosphate: step 2/5. The polypeptide is Phosphoglycerate kinase (Cronobacter sakazakii (strain ATCC BAA-894) (Enterobacter sakazakii)).